Consider the following 314-residue polypeptide: Ketimine reductase mu-crystallin (314 aa).

R47 serves as a coordination point for 3,3',5-triiodo-L-thyronine. Residues S91, H92, R119, A144, V146, Q147, N168, R169, T170, N173, T205, and M206 each contribute to the NADPH site. E257 contributes to the 3,3',5-triiodo-L-thyronine binding site. S292 is a binding site for NADPH.

This sequence belongs to the ornithine cyclodeaminase/mu-crystallin family. As to quaternary structure, homodimer. Binds the thyroid hormone triiodothyronine (T3); T3 binding inhibits enzymatic activity.

It is found in the cytoplasm. The catalysed reaction is L-pipecolate + NAD(+) = Delta(1)-piperideine-2-carboxylate + NADH + H(+). The enzyme catalyses L-pipecolate + NADP(+) = Delta(1)-piperideine-2-carboxylate + NADPH + H(+). It carries out the reaction L-proline + NADP(+) = 1-pyrroline-2-carboxylate + NADPH + H(+). It catalyses the reaction L-proline + NAD(+) = 1-pyrroline-2-carboxylate + NADH + H(+). The catalysed reaction is (3R)-1,4-thiomorpholine-3-carboxylate + NAD(+) = 3,4-dehydrothiomorpholine-3-carboxylate + NADH + 2 H(+). The enzyme catalyses (3R)-1,4-thiomorpholine-3-carboxylate + NADP(+) = 3,4-dehydrothiomorpholine-3-carboxylate + NADPH + 2 H(+). It carries out the reaction (S)-cystathionine ketimine + NADH + 2 H(+) = (3R,5S)-2,3,5,6,7-pentahydro-1,4-thiazepine-3,5-dicarboxylate + NAD(+). It catalyses the reaction (S)-cystathionine ketimine + NADPH + 2 H(+) = (3R,5S)-2,3,5,6,7-pentahydro-1,4-thiazepine-3,5-dicarboxylate + NADP(+). The catalysed reaction is (R)-lanthionine ketimine + NADPH + 2 H(+) = (3R,5R)-1,4-thiomorpholine-3,5-dicarboxylate + NADP(+). The enzyme catalyses Delta(2)-thiazoline-2-carboxylate + NADPH + 2 H(+) = L-thiazolidine-2-carboxylate + NADP(+). Functionally, catalyzes the NAD(P)H-dependent reduction of imine double bonds of a number of cyclic ketimine substrates, including sulfur-containing cyclic ketimines. Under physiological conditions, it efficiently catalyzes delta(1)-piperideine-2-carboxylate (P2C) and delta(1)-pyrroline-2-carboxylate (Pyr2C) reduction, suggesting a central role in lysine and glutamate metabolism. Additional substrates are (S)-cystathionine ketimine (CysK), 3,4-dehydrothiomorpholine-3-carboxylate (AECK), and (R)-lanthionine ketimine (LK) that is reduced at very low rate compared to other substrates. Also catalyzes the NAD(P)H-dependent reduction of delta(2)-thiazoline-2-carboxylate (T2C). The sequence is that of Ketimine reductase mu-crystallin (CRYM) from Bos taurus (Bovine).